We begin with the raw amino-acid sequence, 458 residues long: UDP-N-acetylmuramate--L-alanine ligase (458 aa).

An ATP-binding site is contributed by 115–121 (GSHGKTT).

It belongs to the MurCDEF family.

It is found in the cytoplasm. The catalysed reaction is UDP-N-acetyl-alpha-D-muramate + L-alanine + ATP = UDP-N-acetyl-alpha-D-muramoyl-L-alanine + ADP + phosphate + H(+). It functions in the pathway cell wall biogenesis; peptidoglycan biosynthesis. In terms of biological role, cell wall formation. This Anaeromyxobacter dehalogenans (strain 2CP-C) protein is UDP-N-acetylmuramate--L-alanine ligase.